The chain runs to 233 residues: 2-C-methyl-D-erythritol 4-phosphate cytidylyltransferase (233 aa).

This sequence belongs to the IspD/TarI cytidylyltransferase family. IspD subfamily.

It carries out the reaction 2-C-methyl-D-erythritol 4-phosphate + CTP + H(+) = 4-CDP-2-C-methyl-D-erythritol + diphosphate. Its pathway is isoprenoid biosynthesis; isopentenyl diphosphate biosynthesis via DXP pathway; isopentenyl diphosphate from 1-deoxy-D-xylulose 5-phosphate: step 2/6. In terms of biological role, catalyzes the formation of 4-diphosphocytidyl-2-C-methyl-D-erythritol from CTP and 2-C-methyl-D-erythritol 4-phosphate (MEP). The chain is 2-C-methyl-D-erythritol 4-phosphate cytidylyltransferase from Thiobacillus denitrificans (strain ATCC 25259 / T1).